The following is a 189-amino-acid chain: MSIKSDKWIRRMAEQEGMIEPFEPGQIRYDSNNQKLVSYGTSSYGYDVRCAREFKIFTNVHSAVVDPKNFDEHSFVDISSDVCIIPPNSFALARTVEYFRIPRSVLTVCLGKSTYARCGIIVNVTPLEPEWEGHVTLEFSNTTPLPAKIYANEGIAQMLFFESDEICDTSYRDRGGKYQGQTGVTLPKT.

Residues 112–117, 136–138, Gln-157, Tyr-171, and Gln-181 contribute to the dCTP site; these read KSTYAR and TLE. Glu-138 (proton donor/acceptor) is an active-site residue.

Belongs to the dCTP deaminase family. As to quaternary structure, homotrimer.

The catalysed reaction is dCTP + H2O + H(+) = dUTP + NH4(+). It functions in the pathway pyrimidine metabolism; dUMP biosynthesis; dUMP from dCTP (dUTP route): step 1/2. Its function is as follows. Catalyzes the deamination of dCTP to dUTP. The protein is dCTP deaminase of Teredinibacter turnerae (strain ATCC 39867 / T7901).